The following is a 156-amino-acid chain: uncharacterized protein (156 aa).

3 helical membrane-spanning segments follow: residues 21 to 41, 54 to 74, and 80 to 100; these read GVLF…AISL, TICS…IDFA, and SVLV…WALF.

It localises to the membrane. This is an uncharacterized protein from Saccharomyces cerevisiae (strain ATCC 204508 / S288c) (Baker's yeast).